Here is a 198-residue protein sequence, read N- to C-terminus: MLTNNELMEQFYFPDEAPAIPEFLSNDTFQQLEQLMYQQEFSTSDSQSDGANSCSLEMYYDTPSVLELEHMLNAQEQQQHHLQANPLGKNQGRSPRYWNKQQRSKPYDKLSTSMSSSTSSASSSSSSSAGFGGEVLKKRRLAANARERRRMNSLNDAFDKLRDVVPSLGHDRRLSKYETLQMAQAYIGDLVTLLSRDY.

The segment at 76 to 131 (EQQQHHLQANPLGKNQGRSPRYWNKQQRSKPYDKLSTSMSSSTSSASSSSSSSAGF) is disordered. Residues 111-129 (STSMSSSTSSASSSSSSSA) are compositionally biased toward low complexity. The region spanning 138-190 (KRRLAANARERRRMNSLNDAFDKLRDVVPSLGHDRRLSKYETLQMAQAYIGDL) is the bHLH domain.

As to quaternary structure, efficient DNA binding requires dimerization with another bHLH protein. Interacts with Daughterless (da). As to expression, during embryonic development, expression is seen in a small cluster of ectodermal cells during stage 10 which becomes restricted to 1 cell by stage 11. Expression is lost from this cell in the thorax and then the abdomen. Later expression is restricted to sensory organ precursors. Very transient expression was detected in distal leg disks at approximately 0-4 hours after puparium formation (APF), correlating with the anlage of the innervated tarsal claw.

It is found in the nucleus. Functionally, transcription factor involved in early neurogenesis; sensillum basiconica formation and maybe sensillum trichodea development. Promotes multiple dendritic (MD) neuron formation. Required for olfactory sensilla; regulated by lozenge (lz). The protein is Basic helix-loop-helix transcription factor amos (amos) of Drosophila melanogaster (Fruit fly).